The sequence spans 49 residues: Large ribosomal subunit protein bL33A (49 aa).

The protein belongs to the bacterial ribosomal protein bL33 family.

The protein is Large ribosomal subunit protein bL33A of Lactobacillus delbrueckii subsp. bulgaricus (strain ATCC 11842 / DSM 20081 / BCRC 10696 / JCM 1002 / NBRC 13953 / NCIMB 11778 / NCTC 12712 / WDCM 00102 / Lb 14).